The sequence spans 382 residues: Lipid-A-disaccharide synthase (382 aa).

The protein belongs to the LpxB family.

It catalyses the reaction 2-N,3-O-bis[(3R)-3-hydroxytetradecanoyl]-alpha-D-glucosaminyl 1-phosphate + UDP-2-N,3-O-bis[(3R)-3-hydroxytetradecanoyl]-alpha-D-glucosamine = lipid A disaccharide (E. coli) + UDP + H(+). The enzyme catalyses a lipid X + a UDP-2-N,3-O-bis[(3R)-3-hydroxyacyl]-alpha-D-glucosamine = a lipid A disaccharide + UDP + H(+). Its pathway is glycolipid biosynthesis; lipid IV(A) biosynthesis; lipid IV(A) from (3R)-3-hydroxytetradecanoyl-[acyl-carrier-protein] and UDP-N-acetyl-alpha-D-glucosamine: step 5/6. Functionally, condensation of UDP-2,3-diacylglucosamine and 2,3-diacylglucosamine-1-phosphate to form lipid A disaccharide, a precursor of lipid A, a phosphorylated glycolipid that anchors the lipopolysaccharide to the outer membrane of the cell. In Salmonella heidelberg (strain SL476), this protein is Lipid-A-disaccharide synthase.